We begin with the raw amino-acid sequence, 174 residues long: Nicotinamide-nucleotide adenylyltransferase (174 aa).

It belongs to the archaeal NMN adenylyltransferase family.

The protein resides in the cytoplasm. The catalysed reaction is beta-nicotinamide D-ribonucleotide + ATP + H(+) = diphosphate + NAD(+). Its pathway is cofactor biosynthesis; NAD(+) biosynthesis; NAD(+) from nicotinamide D-ribonucleotide: step 1/1. This is Nicotinamide-nucleotide adenylyltransferase from Methanospirillum hungatei JF-1 (strain ATCC 27890 / DSM 864 / NBRC 100397 / JF-1).